Consider the following 350-residue polypeptide: Alcohol dehydrogenase (350 aa).

Cysteine 46 provides a ligand contact to Zn(2+). Residues histidine 47, threonine 48, and histidine 51 each contribute to the NAD(+) site. Residues histidine 69, cysteine 100, cysteine 103, cysteine 106, cysteine 114, and cysteine 156 each contribute to the Zn(2+) site. The NAD(+) site is built by glycine 183, glycine 184, leucine 185, and aspartate 204. A Phosphothreonine modification is found at threonine 205. The NAD(+) site is built by lysine 209 and phenylalanine 224. A Phosphothreonine modification is found at threonine 250. The NAD(+) site is built by valine 271, methionine 273, serine 296, valine 298, and arginine 343.

It belongs to the zinc-containing alcohol dehydrogenase family. Homotetramer. Requires Zn(2+) as cofactor.

The protein resides in the cytoplasm. It carries out the reaction a primary alcohol + NAD(+) = an aldehyde + NADH + H(+). It catalyses the reaction a secondary alcohol + NAD(+) = a ketone + NADH + H(+). The enzyme catalyses ethanol + NAD(+) = acetaldehyde + NADH + H(+). Reduces acetaldehyde to ethanol during the fermentation of glucose. This is Alcohol dehydrogenase (adh1) from Schizosaccharomyces pombe (strain 972 / ATCC 24843) (Fission yeast).